A 508-amino-acid polypeptide reads, in one-letter code: Photosystem II CP47 reaction center protein (508 aa).

A run of 6 helical transmembrane segments spans residues 21–36 (SVHIMHTALVAGWAGS), 101–115 (IVFSGLCFLAAIWHW), 140–156 (GIHLFLSGVACFGFGAF), 203–218 (IAAGTLGILAGLFHLS), 237–252 (VLSSSIAAVFFAAFVV), and 457–472 (SFALLFFFGHIWHGAR).

Belongs to the PsbB/PsbC family. PsbB subfamily. As to quaternary structure, PSII is composed of 1 copy each of membrane proteins PsbA, PsbB, PsbC, PsbD, PsbE, PsbF, PsbH, PsbI, PsbJ, PsbK, PsbL, PsbM, PsbT, PsbX, PsbY, PsbZ, Psb30/Ycf12, at least 3 peripheral proteins of the oxygen-evolving complex and a large number of cofactors. It forms dimeric complexes. Binds multiple chlorophylls. PSII binds additional chlorophylls, carotenoids and specific lipids. serves as cofactor.

It is found in the plastid. It localises to the chloroplast thylakoid membrane. One of the components of the core complex of photosystem II (PSII). It binds chlorophyll and helps catalyze the primary light-induced photochemical processes of PSII. PSII is a light-driven water:plastoquinone oxidoreductase, using light energy to abstract electrons from H(2)O, generating O(2) and a proton gradient subsequently used for ATP formation. This Manihot esculenta (Cassava) protein is Photosystem II CP47 reaction center protein.